The following is a 1311-amino-acid chain: Kinase and exchange factor for Rac A (1311 aa).

The Protein kinase domain occupies 18 to 316; that stretch reads LVFKDIIGKG…STIVTILESI (299 aa). ATP contacts are provided by residues 24–32 and lysine 45; that span reads IGKGNFGCV. Residue aspartate 138 is the Proton acceptor of the active site. 3 disordered regions span residues 169-201, 360-426, and 446-471; these read NGSD…KNNG, QQQS…TTTT, and PLSK…LIGS. The segment covering 451-471 has biased composition (low complexity); that stretch reads QQQQQRNQNSSIIDNNSLIGS. The IQ domain occupies 650 to 679; it reads ELNLIIKLQSRIRGWLVRRRYKIFLSNWKL. The region spanning 691 to 927 is the DH domain; the sequence is QWIRLFNQLI…RETSNYIQSQ (237 aa). Composition is skewed to low complexity over residues 994–1021 and 1031–1044; these read SKYN…TNSN and STSN…GNNN. 3 disordered regions span residues 994–1044, 1114–1145, and 1208–1311; these read SKYN…GNNN, NNPN…NGSI, and GTST…FSKD. Residues 1117–1137 show a composition bias toward gly residues; that stretch reads NGGGSNNNSIGGGGGGRGGSG. Residues 1208–1229 show a composition bias toward polar residues; sequence GTSTPERKTSLVNMSPSTTSSL. A compositionally biased stretch (low complexity) spans 1230–1245; that stretch reads NNIDSNYNNNNNNVTN. The segment covering 1246–1257 has biased composition (polar residues); it reads TPIKSVTSSPSI. The segment covering 1263–1276 has biased composition (low complexity); that stretch reads NDNNQQPQLPSQPN. A compositionally biased stretch (polar residues) spans 1277–1287; the sequence is EEFQFTVPTTP. Basic residues predominate over residues 1290-1303; that stretch reads KKKKRGSFSSKLKR.

This sequence belongs to the protein kinase superfamily. TKL Ser/Thr protein kinase family. The cofactor is Mg(2+).

It catalyses the reaction L-seryl-[protein] + ATP = O-phospho-L-seryl-[protein] + ADP + H(+). The catalysed reaction is L-threonyl-[protein] + ATP = O-phospho-L-threonyl-[protein] + ADP + H(+). The polypeptide is Kinase and exchange factor for Rac A (kxcA) (Dictyostelium discoideum (Social amoeba)).